A 250-amino-acid polypeptide reads, in one-letter code: 3-deoxy-manno-octulosonate cytidylyltransferase (250 aa).

Belongs to the KdsB family.

The protein resides in the cytoplasm. The enzyme catalyses 3-deoxy-alpha-D-manno-oct-2-ulosonate + CTP = CMP-3-deoxy-beta-D-manno-octulosonate + diphosphate. It functions in the pathway nucleotide-sugar biosynthesis; CMP-3-deoxy-D-manno-octulosonate biosynthesis; CMP-3-deoxy-D-manno-octulosonate from 3-deoxy-D-manno-octulosonate and CTP: step 1/1. The protein operates within bacterial outer membrane biogenesis; lipopolysaccharide biosynthesis. Activates KDO (a required 8-carbon sugar) for incorporation into bacterial lipopolysaccharide in Gram-negative bacteria. This is 3-deoxy-manno-octulosonate cytidylyltransferase from Azorhizobium caulinodans (strain ATCC 43989 / DSM 5975 / JCM 20966 / LMG 6465 / NBRC 14845 / NCIMB 13405 / ORS 571).